We begin with the raw amino-acid sequence, 253 residues long: ER membrane protein complex subunit 3 (253 aa).

3 consecutive transmembrane segments (helical) span residues 10-30 (WVLL…QYIM), 126-146 (FIPQ…FILM), and 176-196 (SISW…LIGL).

Belongs to the EMC3 family. Component of the ER membrane protein complex (EMC), which is composed of EMC1, EMC2, EMC3, EMC4, EMC5 and EMC6.

The protein resides in the endoplasmic reticulum membrane. Functionally, the EMC seems to be required for efficient folding of proteins in the endoplasmic reticulum (ER). The polypeptide is ER membrane protein complex subunit 3 (AIM27) (Saccharomyces cerevisiae (strain RM11-1a) (Baker's yeast)).